Here is a 433-residue protein sequence, read N- to C-terminus: 3-phosphoshikimate 1-carboxyvinyltransferase (433 aa).

Positions 21, 22, and 26 each coordinate 3-phosphoshikimate. K21 is a phosphoenolpyruvate binding site. The phosphoenolpyruvate site is built by G92 and R120. 3-phosphoshikimate is bound by residues S166, Q168, D317, and K344. Q168 is a phosphoenolpyruvate binding site. D317 acts as the Proton acceptor in catalysis. Phosphoenolpyruvate contacts are provided by R348 and R391.

The protein belongs to the EPSP synthase family. Monomer.

The protein localises to the cytoplasm. It catalyses the reaction 3-phosphoshikimate + phosphoenolpyruvate = 5-O-(1-carboxyvinyl)-3-phosphoshikimate + phosphate. It participates in metabolic intermediate biosynthesis; chorismate biosynthesis; chorismate from D-erythrose 4-phosphate and phosphoenolpyruvate: step 6/7. Its function is as follows. Catalyzes the transfer of the enolpyruvyl moiety of phosphoenolpyruvate (PEP) to the 5-hydroxyl of shikimate-3-phosphate (S3P) to produce enolpyruvyl shikimate-3-phosphate and inorganic phosphate. This chain is 3-phosphoshikimate 1-carboxyvinyltransferase, found in Caldicellulosiruptor saccharolyticus (strain ATCC 43494 / DSM 8903 / Tp8T 6331).